Reading from the N-terminus, the 152-residue chain is UPF0735 ACT domain-containing protein SAS1579 (152 aa).

Residues 75 to 150 (TLILYVTDIV…YVSKVELISM (76 aa)) enclose the ACT domain.

This sequence belongs to the UPF0735 family.

The protein is UPF0735 ACT domain-containing protein SAS1579 of Staphylococcus aureus (strain MSSA476).